The chain runs to 130 residues: Cytochrome c-type biogenesis protein CcmE (130 aa).

Over 1–7 (MKKKHKR) the chain is Cytoplasmic. Residues 8–28 (LLITSGIFCFLSCAVFFILTT) form a helical; Signal-anchor for type II membrane protein membrane-spanning segment. Over 29–130 (LKENISFFYT…DENYMPKVLK (102 aa)) the chain is Extracellular. Residues His-120 and Tyr-124 each coordinate heme.

This sequence belongs to the CcmE/CycJ family.

It localises to the cell membrane. Its function is as follows. Heme chaperone required for the biogenesis of c-type cytochromes. Transiently binds heme delivered by CcmC and transfers the heme to apo-cytochromes in a process facilitated by CcmF and CcmH. The sequence is that of Cytochrome c-type biogenesis protein CcmE from Wolbachia pipientis wMel.